Reading from the N-terminus, the 132-residue chain is MIVDTSVWIAYLSTSESLASRWLADRIAADSTVIVPEVVMMELLIGKTDEDTAALRRRLLQRFAIEPLAPVRDAEDAAAIHRRCRRGGDTVRSLIDCQVAAMALRIGVAVAHRDRDYEAIRTHCGLRTEPLF.

A PINc domain is found at 1–121 (MIVDTSVWIA…HRDRDYEAIR (121 aa)). Aspartate 96 serves as a coordination point for Mg(2+). Mn(2+)-binding residues include aspartate 96, aspartate 114, and aspartate 116.

The protein belongs to the PINc/VapC protein family. As to quaternary structure, crystallizes as a VapB15-VapC15(2) heterotrimer and as a VapB15(2)-VapC15(2) heterotetramer; each toxin pair forms a homodimer which creates a channel in which the antitoxin binds. Mg(2+) serves as cofactor. Mn(2+) is required as a cofactor.

With respect to regulation, RNase activity inhibited by EDTA. In terms of biological role, toxic component of a type II toxin-antitoxin (TA) system. Degrades total E.coli RNA, which is partially inhibited by cognate antitoxin VapB15. Upon expression in M.smegmatis inhibits colony formation, which is neutralized by coexpression with VapB15. The chain is Ribonuclease VapC15 from Mycobacterium tuberculosis (strain ATCC 25618 / H37Rv).